We begin with the raw amino-acid sequence, 78 residues long: Acyl carrier protein (78 aa).

Residues 1-76 form the Carrier domain; that stretch reads MALFEDIQAV…DVVKYIEDNK (76 aa). The residue at position 36 (Ser-36) is an O-(pantetheine 4'-phosphoryl)serine.

Belongs to the acyl carrier protein (ACP) family. Post-translationally, 4'-phosphopantetheine is transferred from CoA to a specific serine of apo-ACP by AcpS. This modification is essential for activity because fatty acids are bound in thioester linkage to the sulfhydryl of the prosthetic group.

The protein localises to the cytoplasm. It functions in the pathway lipid metabolism; fatty acid biosynthesis. Carrier of the growing fatty acid chain in fatty acid biosynthesis. The polypeptide is Acyl carrier protein (Helicobacter acinonychis (strain Sheeba)).